A 431-amino-acid polypeptide reads, in one-letter code: UDP-N-acetylmuramate--L-alanine ligase (431 aa).

108–114 provides a ligand contact to ATP; the sequence is GAHGKST.

The protein belongs to the MurCDEF family.

It localises to the cytoplasm. The catalysed reaction is UDP-N-acetyl-alpha-D-muramate + L-alanine + ATP = UDP-N-acetyl-alpha-D-muramoyl-L-alanine + ADP + phosphate + H(+). The protein operates within cell wall biogenesis; peptidoglycan biosynthesis. Cell wall formation. This Campylobacter jejuni subsp. doylei (strain ATCC BAA-1458 / RM4099 / 269.97) protein is UDP-N-acetylmuramate--L-alanine ligase.